Consider the following 427-residue polypeptide: Serine protease HTRA2, mitochondrial (427 aa).

The interval 33-57 is disordered; it reads HTASSSKGSGGDNSKDQENNGQNKS. A helical transmembrane segment spans residues 67 to 87; sequence VFQFCVPFSLGALVSAVLIEG. Positions 78–81 match the IAP-binding motif; it reads ALVS. The serine protease stretch occupies residues 144–307; that stretch reads SNGSGFVIEQ…IPIDYVKVFL (164 aa). Residues histidine 162, aspartate 194, and serine 271 each act as charge relay system in the active site. The PDZ domain maps to 330–415; the sequence is MGITMLTLTP…DLEIVILRGV (86 aa).

Belongs to the peptidase S1C family. In terms of assembly, interacts with th/DIAP1 (via BIR 2 domain).

The protein localises to the mitochondrion intermembrane space. It localises to the mitochondrion membrane. It carries out the reaction Cleavage of non-polar aliphatic amino-acids at the P1 position, with a preference for Val, Ile and Met. At the P2 and P3 positions, Arg is selected most strongly with a secondary preference for other hydrophilic residues.. Serine protease that shows proteolytic activity against a non-specific substrate beta-casein. Promotes or induces cell death either by direct binding to and inhibition of BIRC proteins (also called inhibitor of apoptosis proteins, IAPs), leading to an increase in caspase activity, or by a BIRC inhibition-independent, caspase-independent and serine protease activity-dependent mechanism. Can antagonize antiapoptotic activity of th/Diap1 by directly inducing the degradation of th/Diap1. This chain is Serine protease HTRA2, mitochondrial, found in Drosophila persimilis (Fruit fly).